Reading from the N-terminus, the 293-residue chain is 4-diphosphocytidyl-2-C-methyl-D-erythritol kinase (293 aa).

K16 is an active-site residue. 99 to 109 (PMGAGLGGGSS) lines the ATP pocket. D141 is a catalytic residue.

Belongs to the GHMP kinase family. IspE subfamily.

The enzyme catalyses 4-CDP-2-C-methyl-D-erythritol + ATP = 4-CDP-2-C-methyl-D-erythritol 2-phosphate + ADP + H(+). It functions in the pathway isoprenoid biosynthesis; isopentenyl diphosphate biosynthesis via DXP pathway; isopentenyl diphosphate from 1-deoxy-D-xylulose 5-phosphate: step 3/6. Its function is as follows. Catalyzes the phosphorylation of the position 2 hydroxy group of 4-diphosphocytidyl-2C-methyl-D-erythritol. The sequence is that of 4-diphosphocytidyl-2-C-methyl-D-erythritol kinase from Burkholderia lata (strain ATCC 17760 / DSM 23089 / LMG 22485 / NCIMB 9086 / R18194 / 383).